Here is a 95-residue protein sequence, read N- to C-terminus: Small ribosomal subunit protein bS6 (95 aa).

The protein belongs to the bacterial ribosomal protein bS6 family.

Functionally, binds together with bS18 to 16S ribosomal RNA. The polypeptide is Small ribosomal subunit protein bS6 (Streptococcus agalactiae serotype Ia (strain ATCC 27591 / A909 / CDC SS700)).